We begin with the raw amino-acid sequence, 83 residues long: Small ribosomal subunit protein uS17 (83 aa).

Belongs to the universal ribosomal protein uS17 family. Part of the 30S ribosomal subunit.

One of the primary rRNA binding proteins, it binds specifically to the 5'-end of 16S ribosomal RNA. In Francisella tularensis subsp. holarctica (strain FTNF002-00 / FTA), this protein is Small ribosomal subunit protein uS17.